Consider the following 133-residue polypeptide: Ribosome-binding factor A (133 aa).

Belongs to the RbfA family. As to quaternary structure, monomer. Binds 30S ribosomal subunits, but not 50S ribosomal subunits or 70S ribosomes.

It is found in the cytoplasm. In terms of biological role, one of several proteins that assist in the late maturation steps of the functional core of the 30S ribosomal subunit. Associates with free 30S ribosomal subunits (but not with 30S subunits that are part of 70S ribosomes or polysomes). Required for efficient processing of 16S rRNA. May interact with the 5'-terminal helix region of 16S rRNA. The sequence is that of Ribosome-binding factor A from Alteromonas mediterranea (strain DSM 17117 / CIP 110805 / LMG 28347 / Deep ecotype).